Here is a 209-residue protein sequence, read N- to C-terminus: Uracil phosphoribosyltransferase (209 aa).

Residues arginine 79, arginine 104, and 131 to 139 each bind 5-phospho-alpha-D-ribose 1-diphosphate; that span reads TPVVATANT. Uracil contacts are provided by residues isoleucine 194 and 199 to 201; that span reads GDA. Aspartate 200 is a 5-phospho-alpha-D-ribose 1-diphosphate binding site.

It belongs to the UPRTase family. Mg(2+) serves as cofactor.

The enzyme catalyses UMP + diphosphate = 5-phospho-alpha-D-ribose 1-diphosphate + uracil. It participates in pyrimidine metabolism; UMP biosynthesis via salvage pathway; UMP from uracil: step 1/1. Allosterically activated by GTP. Catalyzes the conversion of uracil and 5-phospho-alpha-D-ribose 1-diphosphate (PRPP) to UMP and diphosphate. The polypeptide is Uracil phosphoribosyltransferase (Bradyrhizobium diazoefficiens (strain JCM 10833 / BCRC 13528 / IAM 13628 / NBRC 14792 / USDA 110)).